The following is a 139-amino-acid chain: MTERTFSIIKPDATRRNLTGAINAVIEAAGLRIVAQRRVKLTEAQAKKFYEVHAERPFYGELVGQMTAEPVVVQVLQGDNAVLKYREVMGATNPENADEGTIRKLFALSIGENSVHGSDSLENAGIEIAQFFTEDEIVG.

ATP contacts are provided by Lys10, Phe58, Arg86, Thr92, Arg103, and Asn113. The Pros-phosphohistidine intermediate role is filled by His116.

This sequence belongs to the NDK family. As to quaternary structure, homotetramer. Requires Mg(2+) as cofactor.

It is found in the cytoplasm. It catalyses the reaction a 2'-deoxyribonucleoside 5'-diphosphate + ATP = a 2'-deoxyribonucleoside 5'-triphosphate + ADP. The catalysed reaction is a ribonucleoside 5'-diphosphate + ATP = a ribonucleoside 5'-triphosphate + ADP. Its function is as follows. Major role in the synthesis of nucleoside triphosphates other than ATP. The ATP gamma phosphate is transferred to the NDP beta phosphate via a ping-pong mechanism, using a phosphorylated active-site intermediate. This is Nucleoside diphosphate kinase from Caulobacter vibrioides (strain ATCC 19089 / CIP 103742 / CB 15) (Caulobacter crescentus).